Consider the following 793-residue polypeptide: Protocadherin beta-7 (793 aa).

The N-terminal stretch at 1–26 (MEARVERAVQKRQVLFLCVFLGMSWA) is a signal peptide. At 27 to 688 (GAEPLRYFVA…DQANSLTVYL (662 aa)) the chain is on the extracellular side. 5 Cadherin domains span residues 35-133 (VAEE…APVF), 138-242 (ISLK…APDF), 247-347 (YKVQ…RPEL), 352-451 (LTSP…APAF), and 456-561 (YTLF…SPFV). N-linked (GlcNAc...) asparagine glycosylation occurs at Asn-169. Residues Asn-418 and Asn-436 are each glycosylated (N-linked (GlcNAc...) asparagine). N-linked (GlcNAc...) asparagine glycosylation is present at Asn-567. The Cadherin 6 domain occupies 568-671 (SSAPCTEPLP…LVDGFSQPYL (104 aa)). A helical transmembrane segment spans residues 689–709 (VVALASVSSLFLLSVLLFVAV). The Cytoplasmic portion of the chain corresponds to 710 to 793 (RLCRRSRAAP…NRPFQNNLGF (84 aa)).

The protein resides in the cell membrane. Functionally, potential calcium-dependent cell-adhesion protein. May be involved in the establishment and maintenance of specific neuronal connections in the brain. The sequence is that of Protocadherin beta-7 (PCDHB7) from Homo sapiens (Human).